Consider the following 221-residue polypeptide: Iron-sulfur cluster repair protein YtfE (221 aa).

It belongs to the RIC family. YtfE subfamily. In terms of assembly, homodimer.

It is found in the cytoplasm. Functionally, di-iron-containing protein involved in the repair of iron-sulfur clusters damaged by oxidative and nitrosative stress conditions. This chain is Iron-sulfur cluster repair protein YtfE, found in Pectobacterium atrosepticum (strain SCRI 1043 / ATCC BAA-672) (Erwinia carotovora subsp. atroseptica).